The sequence spans 434 residues: Gamma-enolase (434 aa).

An N-acetylserine modification is found at Ser2. Residue Lys5 is modified to N6-acetyllysine. Thr26 carries the phosphothreonine modification. Position 40 (Ser40) interacts with Mg(2+). Tyr44 is subject to Phosphotyrosine. At Lys60 the chain carries N6-acetyllysine; alternate. Lys60 is modified (N6-succinyllysine; alternate). At Lys64 the chain carries N6-acetyllysine. The residue at position 89 (Lys89) is an N6-acetyllysine; alternate. N6-succinyllysine; alternate is present on Lys89. The substrate site is built by His158 and Glu167. Lys193, Lys197, and Lys199 each carry N6-acetyllysine. Position 202 is an N6-acetyllysine; alternate (Lys202). Residue Lys202 forms a Glycyl lysine isopeptide (Lys-Gly) (interchain with G-Cter in SUMO2); alternate linkage. Catalysis depends on Glu210, which acts as the Proton donor. Residues Lys228 and Lys233 each carry the N6-acetyllysine; alternate modification. Lys228 bears the N6-succinyllysine; alternate mark. Lys233 bears the N6-(2-hydroxyisobutyryl)lysine; alternate mark. Asp245 is a Mg(2+) binding site. Lys256 carries the N6-acetyllysine modification. A Phosphoserine modification is found at Ser263. Position 287 is a phosphotyrosine (Tyr287). Ser291 bears the Phosphoserine mark. Mg(2+) contacts are provided by Glu293 and Asp318. 2 residues coordinate substrate: Glu293 and Asp318. N6-acetyllysine is present on residues Lys335 and Lys343. The active-site Proton acceptor is Lys343. Substrate contacts are provided by residues Ser370–Ser373 and Lys394. N6-acetyllysine is present on Lys406.

This sequence belongs to the enolase family. In terms of assembly, mammalian enolase is composed of 3 isozyme subunits, alpha, beta and gamma, which can form homodimers or heterodimers which are cell-type and development-specific. The cofactor is Mg(2+). As to expression, the alpha/alpha homodimer is expressed in embryo and in most adult tissues. The alpha/beta heterodimer and the beta/beta homodimer are found in striated muscle, and the alpha/gamma heterodimer and the gamma/gamma homodimer in neurons.

It localises to the cytoplasm. Its subcellular location is the cell membrane. The catalysed reaction is (2R)-2-phosphoglycerate = phosphoenolpyruvate + H2O. It participates in carbohydrate degradation; glycolysis; pyruvate from D-glyceraldehyde 3-phosphate: step 4/5. Functionally, has neurotrophic and neuroprotective properties on a broad spectrum of central nervous system (CNS) neurons. Binds, in a calcium-dependent manner, to cultured neocortical neurons and promotes cell survival. This is Gamma-enolase (ENO2) from Homo sapiens (Human).